We begin with the raw amino-acid sequence, 101 residues long: MAKMALIQRELKRDNLVAKYAKKHAEFKAIAGDVKRSDEERAAARLGLQKLPRNANPTRQRNRCAITGRPRGTFQHFGLARAKIREMAFAGEIPGIVKASW.

It belongs to the universal ribosomal protein uS14 family. Part of the 30S ribosomal subunit. Contacts proteins S3 and S10.

Functionally, binds 16S rRNA, required for the assembly of 30S particles and may also be responsible for determining the conformation of the 16S rRNA at the A site. The sequence is that of Small ribosomal subunit protein uS14 from Albidiferax ferrireducens (strain ATCC BAA-621 / DSM 15236 / T118) (Rhodoferax ferrireducens).